Consider the following 210-residue polypeptide: Probable GTP-binding protein EngB (210 aa).

The EngB-type G domain occupies 25–199 (CGIEVAFAGR…RQKLDSWFSE (175 aa)). Residues 33-40 (GRSNAGKS), 60-64 (GRTQL), 78-81 (DLPG), 145-148 (TKAD), and 178-180 (FSS) contribute to the GTP site. Mg(2+) contacts are provided by Ser40 and Thr62.

The protein belongs to the TRAFAC class TrmE-Era-EngA-EngB-Septin-like GTPase superfamily. EngB GTPase family. It depends on Mg(2+) as a cofactor.

Its function is as follows. Necessary for normal cell division and for the maintenance of normal septation. In Salmonella paratyphi C (strain RKS4594), this protein is Probable GTP-binding protein EngB.